A 346-amino-acid chain; its full sequence is L-glyceraldehyde 3-phosphate reductase (346 aa).

NADP(+) contacts are provided by tryptophan 33, aspartate 61, tyrosine 66, serine 168, glutamine 193, threonine 223, leucine 225, glutamine 227, lysine 233, serine 303, glutamine 307, and asparagine 311.

It belongs to the shaker potassium channel beta subunit family.

It carries out the reaction a primary alcohol + NADP(+) = an aldehyde + NADPH + H(+). Its function is as follows. Aldo-keto reductase that catalyzes the stereospecific, NADPH-dependent reduction of L-glyceraldehyde 3-phosphate (L-GAP) to L-glycerol 3-phosphate (L-G3P). The polypeptide is L-glyceraldehyde 3-phosphate reductase (Escherichia coli O157:H7).